Reading from the N-terminus, the 398-residue chain is Transcription factor kk1f (398 aa).

The interval 1-28 (MTFVETVAVPDNEERPSAGHNRPVADST) is disordered. In terms of domain architecture, bZIP spans 31-62 (PNAREMKVQNRVAQRTHHRRLKTKLEVLRERL). A basic motif region spans residues 34-50 (REMKVQNRVAQRTHHRR). Positions 51 to 58 (LKTKLEVL) are leucine-zipper.

Belongs to the bZIP family.

The protein resides in the nucleus. It participates in secondary metabolite biosynthesis. Functionally, transcription factor; part of the gene cluster that mediates the biosynthesis of KK-1, a novel cyclic depsipeptide with 10 residues which is a promising active compound with high activity against many plant pathogens, especially Botrytis cinerea. Positively regulates the expression of all the genes from the KK-1 biosynthesis gene cluster. This is Transcription factor kk1f from Curvularia clavata.